The primary structure comprises 326 residues: Protein farnesyltransferase/geranylgeranyltransferase type-1 subunit alpha (326 aa).

PFTA repeat units lie at residues 55–89 (RSPR…ALNH), 90–124 (DLFE…KLGP), 126–160 (VAGR…ALGG), 161–194 (WEDE…QSPL), and 201–235 (MRES…DDKE).

The protein belongs to the protein prenyltransferase subunit alpha family. Heterodimer of an alpha and a beta subunit. Mg(2+) serves as cofactor.

It carries out the reaction L-cysteinyl-[protein] + (2E,6E)-farnesyl diphosphate = S-(2E,6E)-farnesyl-L-cysteinyl-[protein] + diphosphate. The enzyme catalyses geranylgeranyl diphosphate + L-cysteinyl-[protein] = S-geranylgeranyl-L-cysteinyl-[protein] + diphosphate. In terms of biological role, essential subunit of both the farnesyltransferase and the geranylgeranyltransferase complex. Contributes to the transfer of a farnesyl or geranylgeranyl moiety from farnesyl or geranylgeranyl diphosphate to a cysteine at the fourth position from the C-terminus of several proteins having the C-terminal sequence Cys-aliphatic-aliphatic-X. The sequence is that of Protein farnesyltransferase/geranylgeranyltransferase type-1 subunit alpha (FTA) from Arabidopsis thaliana (Mouse-ear cress).